Reading from the N-terminus, the 682-residue chain is Zinc finger protein 16 (682 aa).

A compositionally biased stretch (basic and acidic residues) spans methionine 1–glutamate 10. The segment at methionine 1–alanine 43 is disordered. The interval tyrosine 62–isoleucine 210 is necessary for transcription activation. The C2H2-type 1; degenerate zinc finger occupies leucine 209 to histidine 231. The C2H2-type 2; degenerate zinc-finger motif lies at phenylalanine 237–histidine 259. Lysine 253 is covalently cross-linked (Glycyl lysine isopeptide (Lys-Gly) (interchain with G-Cter in SUMO2)). 8 consecutive C2H2-type zinc fingers follow at residues tyrosine 265–histidine 287, tyrosine 293–histidine 315, tyrosine 321–histidine 343, tyrosine 349–histidine 371, phenylalanine 377–histidine 399, tyrosine 405–histidine 427, tyrosine 433–histidine 455, and histidine 461–histidine 483. Required for nuclear localization stretches follow at residues serine 268 to arginine 393 and arginine 341 to glycine 373. The interval serine 473 to alanine 503 is required for nuclear localization. Lysine 487 carries the post-translational modification N6-acetyllysine. 7 consecutive C2H2-type zinc fingers follow at residues tyrosine 489–histidine 511, tyrosine 517–histidine 539, tyrosine 545–histidine 567, histidine 573–histidine 595, tyrosine 601–histidine 623, tyrosine 629–histidine 651, and tyrosine 657–histidine 679.

The protein belongs to the krueppel C2H2-type zinc-finger protein family. In terms of assembly, interacts with INCA1; the interaction inhibits INCA1 activity and induces the cell cycle process. Ubiquitous.

It is found in the nucleus. Its function is as follows. Acts as a transcriptional activator. Promotes cell proliferation by facilitating the cell cycle phase transition from the S to G2/M phase. Involved in both the hemin- and phorbol myristate acetate (PMA)-induced erythroid and megakaryocytic differentiation, respectively. Also plays a role as an inhibitor of cell apoptosis. In Homo sapiens (Human), this protein is Zinc finger protein 16 (ZNF16).